Here is a 512-residue protein sequence, read N- to C-terminus: MAAKTVQYDNIYLNLSEKPGKLRIAPSGLGWKSPSLAEPFTLPISEIRRFCWSRFARGYELKIILKSKDPVSLDGFSQEDLDDLINVIKQNFDMGIEQKEFSIKGWNWGEANFLGSELVFDVNSRPAFEIPISAVTNTNLSGKNEVALEFSTTDDKQIPSAQVDELVEMRLYVPGTTAKEDAADGEEVEQNAANLFYESLKERADIGQAAGDAIVSFSEILLLTPRGRYDIDMYETCMRLRGKTYDYKVEYSSINSLFLLPKPDEQHVVFVIGLEPPLRQGQTRYPFLVTQFVRDEDMEVDLNIEETVLKEKYADKVKASYDQPAFEVVSQIFRGLTGRKVTTPAEFLSHEGHAAVKCSYKANEGQLYCLDKSFLFIPKPTLLMNTSDITRVTLSRVGMSVSAARTFDLTFTLRSGTSYQFSNINRVEQSALVAFLESKQIKIHNDLADETQQTLLTSALDDEDEEGDEEMEEALSEDEDFQAESESDVAEEYDENAESSDEEGASGAEGSE.

The segment covering 460–504 (LDDEDEEGDEEMEEALSEDEDFQAESESDVAEEYDENAESSDEEG) has biased composition (acidic residues). The interval 460-512 (LDDEDEEGDEEMEEALSEDEDFQAESESDVAEEYDENAESSDEEGASGAEGSE) is disordered.

The protein belongs to the SSRP1 family. As to quaternary structure, forms a stable heterodimer with spt16. The spt16-pob3 dimer weakly associates with multiple molecules of nhp6 to form the FACT complex. Interacts with abo1.

It is found in the nucleus. It localises to the chromosome. Component of the FACT complex, a general chromatin factor that acts to reorganize nucleosomes. The FACT complex is involved in multiple processes that require DNA as a template such as mRNA elongation, DNA replication and DNA repair. During transcription elongation the FACT complex acts as a histone chaperone that both destabilizes and restores nucleosomal structure. It facilitates the passage of RNA polymerase II and transcription by promoting the dissociation of one histone H2A-H2B dimer from the nucleosome, then subsequently promotes the reestablishment of the nucleosome following the passage of RNA polymerase II. The polypeptide is FACT complex subunit pob3 (Schizosaccharomyces pombe (strain 972 / ATCC 24843) (Fission yeast)).